The primary structure comprises 443 residues: Leucine/methionine racemase (443 aa).

Pyridoxal 5'-phosphate contacts are provided by residues 110–111 and Q247; that span reads GS. Position 273 is an N6-(pyridoxal phosphate)lysine (K273). T302 lines the pyridoxal 5'-phosphate pocket.

This sequence belongs to the class-III pyridoxal-phosphate-dependent aminotransferase family. Requires pyridoxal 5'-phosphate as cofactor.

It carries out the reaction L-leucine = D-leucine. It catalyses the reaction L-methionine = D-methionine. Its activity is regulated as follows. Activity is strongly inhibited by several metal ions, including Co(2+), Zn(2+), Ni(2+), Cu(2+) and Fe(3+), and nonsubstrate amino acids such as L-arginine and L-lysine. Activity is completely abolished in the presence of hydroxylamine, an inhibitor of pyridoxal phosphate-dependent enzymes. Functionally, amino acid racemase with moderate substrate specificity. Is primarily active toward leucine, which is the preferred substrate, and methionine. Also exhibits lower levels of activity toward phenylalanine, alanine and serine. This Thermococcus litoralis (strain ATCC 51850 / DSM 5473 / JCM 8560 / NS-C) protein is Leucine/methionine racemase.